The sequence spans 342 residues: Ribosomal RNA small subunit methyltransferase C (342 aa).

It belongs to the methyltransferase superfamily. RsmC family. As to quaternary structure, monomer.

The protein localises to the cytoplasm. The catalysed reaction is guanosine(1207) in 16S rRNA + S-adenosyl-L-methionine = N(2)-methylguanosine(1207) in 16S rRNA + S-adenosyl-L-homocysteine + H(+). Specifically methylates the guanine in position 1207 of 16S rRNA in the 30S particle. This chain is Ribosomal RNA small subunit methyltransferase C, found in Shewanella oneidensis (strain ATCC 700550 / JCM 31522 / CIP 106686 / LMG 19005 / NCIMB 14063 / MR-1).